The sequence spans 1076 residues: Nickel and cobalt resistance protein CnrA (1076 aa).

Helical transmembrane passes span 14–34 (WLVL…LNLL), 366–386 (TVAK…FALL), 390–410 (RAAT…AIGM), 418–438 (NLMS…VIIV), 475–495 (PTVY…TFQG), 502–522 (SPMV…SLTF), 561–581 (PMPF…AFTF), 903–923 (RLAI…YMAI), 928–948 (LTAT…FALL), 959–979 (AVGF…LISA), 1003–1023 (RPVL…AIAT), and 1035–1055 (TVVI…LPAL).

This sequence belongs to the resistance-nodulation-cell division (RND) (TC 2.A.6) family.

The protein localises to the cell inner membrane. Its function is as follows. The products of the genes cnrA, cnrB, and cnrC are likely to form a membrane-bound protein complex catalyzing an energy-dependent efflux of Ni(2+) and Co(2+). The mechanism of action of the CnrCBA complex may be that of a proton/cation antiporter. The chain is Nickel and cobalt resistance protein CnrA (cnrA) from Cupriavidus metallidurans (strain ATCC 43123 / DSM 2839 / NBRC 102507 / CH34) (Ralstonia metallidurans).